A 366-amino-acid polypeptide reads, in one-letter code: E3 ubiquitin-protein ligase SINA-like 1 (366 aa).

Residues methionine 1–glycine 37 are disordered. An RING-type; degenerate zinc finger spans residues cysteine 56 to serine 92. Residues valine 106–leucine 354 are SBD. Residues alanine 109–lysine 232 form an SIAH-type; degenerate zinc finger. Positions 114, 186, 198, 202, 209, 214, 226, and 231 each coordinate Zn(2+).

It belongs to the SINA (Seven in absentia) family.

It catalyses the reaction S-ubiquitinyl-[E2 ubiquitin-conjugating enzyme]-L-cysteine + [acceptor protein]-L-lysine = [E2 ubiquitin-conjugating enzyme]-L-cysteine + N(6)-ubiquitinyl-[acceptor protein]-L-lysine.. It functions in the pathway protein modification; protein ubiquitination. Its function is as follows. E3 ubiquitin-protein ligase that mediates ubiquitination and subsequent proteasomal degradation of target proteins. E3 ubiquitin ligases accept ubiquitin from an E2 ubiquitin-conjugating enzyme in the form of a thioester and then directly transfers the ubiquitin to targeted substrates. It probably triggers the ubiquitin-mediated degradation of different substrates. The sequence is that of E3 ubiquitin-protein ligase SINA-like 1 from Arabidopsis thaliana (Mouse-ear cress).